A 228-amino-acid polypeptide reads, in one-letter code: Small ribosomal subunit protein uS7A (228 aa).

It belongs to the universal ribosomal protein uS7 family.

This is Small ribosomal subunit protein uS7A (RpS5a) from Drosophila melanogaster (Fruit fly).